The primary structure comprises 382 residues: Neuropeptide Y receptor type 1 (382 aa).

Topologically, residues 1 to 33 (MNSTLFSRVENYSVHYNVSENSPFLAFENDDCH) are extracellular. N-linked (GlcNAc...) asparagine glycosylation is found at Asn2, Asn11, and Asn17. The chain crosses the membrane as a helical span at residues 34–54 (LPLAVIFTLALAYGAVIILGV). At 55–75 (SGNLALIIIILKQKEMRNVTN) the chain is on the cytoplasmic side. A helical transmembrane segment spans residues 76–96 (ILIVNLSFSDLLVAVMCLPFT). At 97–115 (FVYTLMDHWVFGETMCKLN) the chain is on the extracellular side. An intrachain disulfide couples Cys112 to Cys197. Residues 116–136 (PFVQCVSITVSIFSLVLIAVE) form a helical membrane-spanning segment. Over 137 to 153 (RHQLIINPRGWRPNNRH) the chain is Cytoplasmic. Residues 154 to 174 (AYIGITVIWVLAVASSLPFVI) traverse the membrane as a helical segment. Over 175 to 210 (YQILTDEPFQNVSLAAFKDKYVCFDKFPSDSHRLSY) the chain is Extracellular. A helical transmembrane segment spans residues 211–231 (TTLLLVLQYFGPLCFIFICYF). Residues 232–259 (KIYIRLKRRNNMMDKIRDSKYRSSETKR) lie on the Cytoplasmic side of the membrane. The helical transmembrane segment at 260 to 280 (INVMLLSIVVAFAVCWLPLTI) threads the bilayer. Residues 281-298 (FNTVFDWNHQIIATCNHN) lie on the Extracellular side of the membrane. The helical transmembrane segment at 299–319 (LLFLLCHLTAMISTCVNPIFY) threads the bilayer. The Cytoplasmic segment spans residues 320 to 382 (GFLNKNFQRD…KISMNDNEKI (63 aa)). Cys337 carries S-palmitoyl cysteine lipidation. Phosphoserine occurs at positions 367 and 375.

The protein belongs to the G-protein coupled receptor 1 family. As to expression, brain.

The protein resides in the cell membrane. Functionally, receptor for neuropeptide Y and peptide YY. This Rattus norvegicus (Rat) protein is Neuropeptide Y receptor type 1 (Npy1r).